The primary structure comprises 82 residues: MNRKLLFVTLMVTMLVMQPSEGGKVWDWIKSTAKKLWNSEPVKELKNTALNAAKNLVAEKIGATPSEAGQMPFDEFMDILYE.

A signal peptide spans 1–22 (MNRKLLFVTLMVTMLVMQPSEG). Residues 67-82 (EAGQMPFDEFMDILYE) constitute a propeptide that is removed on maturation.

In terms of tissue distribution, expressed by the venom gland.

It localises to the secreted. The protein resides in the target cell membrane. Its function is as follows. At high concentrations, acts as a pore former in cellular membranes and causes the leakage of the cells. At submicromolar concentrations, degranulates granulocytes and has a weak hemolytic activity against human erythrocytes. Also strongly inhibits the production of superoxide anions. Has a strong antibacterial activity against Gram-negative bacteria but is less active against Gram-positive bacteria. Also has antifungal activity. This is Opistoporin-1 from Opistophthalmus carinatus (African yellow leg scorpion).